Reading from the N-terminus, the 464-residue chain is ATP synthase subunit beta (464 aa).

Residue 153–160 (GGAGVGKT) coordinates ATP.

The protein belongs to the ATPase alpha/beta chains family. In terms of assembly, F-type ATPases have 2 components, CF(1) - the catalytic core - and CF(0) - the membrane proton channel. CF(1) has five subunits: alpha(3), beta(3), gamma(1), delta(1), epsilon(1). CF(0) has three main subunits: a(1), b(2) and c(9-12). The alpha and beta chains form an alternating ring which encloses part of the gamma chain. CF(1) is attached to CF(0) by a central stalk formed by the gamma and epsilon chains, while a peripheral stalk is formed by the delta and b chains.

The protein localises to the cell membrane. It carries out the reaction ATP + H2O + 4 H(+)(in) = ADP + phosphate + 5 H(+)(out). Functionally, produces ATP from ADP in the presence of a proton gradient across the membrane. The catalytic sites are hosted primarily by the beta subunits. This Alkaliphilus oremlandii (strain OhILAs) (Clostridium oremlandii (strain OhILAs)) protein is ATP synthase subunit beta.